A 374-amino-acid polypeptide reads, in one-letter code: UDP-N-acetylglucosamine--N-acetylmuramyl-(pentapeptide) pyrophosphoryl-undecaprenol N-acetylglucosamine transferase (374 aa).

Residues 13–15, Asn124, Arg165, Ser193, and Gln294 contribute to the UDP-N-acetyl-alpha-D-glucosamine site; that span reads TGG.

The protein belongs to the glycosyltransferase 28 family. MurG subfamily.

It localises to the cell inner membrane. The enzyme catalyses di-trans,octa-cis-undecaprenyl diphospho-N-acetyl-alpha-D-muramoyl-L-alanyl-D-glutamyl-meso-2,6-diaminopimeloyl-D-alanyl-D-alanine + UDP-N-acetyl-alpha-D-glucosamine = di-trans,octa-cis-undecaprenyl diphospho-[N-acetyl-alpha-D-glucosaminyl-(1-&gt;4)]-N-acetyl-alpha-D-muramoyl-L-alanyl-D-glutamyl-meso-2,6-diaminopimeloyl-D-alanyl-D-alanine + UDP + H(+). It participates in cell wall biogenesis; peptidoglycan biosynthesis. Its function is as follows. Cell wall formation. Catalyzes the transfer of a GlcNAc subunit on undecaprenyl-pyrophosphoryl-MurNAc-pentapeptide (lipid intermediate I) to form undecaprenyl-pyrophosphoryl-MurNAc-(pentapeptide)GlcNAc (lipid intermediate II). The chain is UDP-N-acetylglucosamine--N-acetylmuramyl-(pentapeptide) pyrophosphoryl-undecaprenol N-acetylglucosamine transferase from Rhizobium etli (strain ATCC 51251 / DSM 11541 / JCM 21823 / NBRC 15573 / CFN 42).